We begin with the raw amino-acid sequence, 177 residues long: MTQKAKNTIYLLILIILSMLCLVYASVPLYSIFCKVTGYGGTVRTATVTQSKLGKTTIKIRFNADINKELPWKFYPEIPYTTVKPGEQKLIFYRAENLTNEYVSGMAVYNVTPYKVGKYFNKVACFCFTKQTLSPYQKTIMPVSFFIDPNIETDPETSDVKLITLSYTFFKYKETTK.

Residues methionine 1–threonine 8 are Cytoplasmic-facing. Residues isoleucine 9–leucine 29 traverse the membrane as a helical; Signal-anchor for type II membrane protein segment. Topologically, residues tyrosine 30–lysine 177 are periplasmic.

The protein belongs to the COX11/CtaG family.

The protein resides in the cell inner membrane. Its function is as follows. Exerts its effect at some terminal stage of cytochrome c oxidase synthesis, probably by being involved in the insertion of the copper B into subunit I. In Ehrlichia ruminantium (strain Gardel), this protein is Cytochrome c oxidase assembly protein CtaG.